Here is a 191-residue protein sequence, read N- to C-terminus: Cathelicidin-related peptide Oh-Cath (191 aa).

Residues 1–22 (MEGFFWKTLLVVGALAIGGTSS) form the signal peptide. The propeptide occupies 23 to 161 (LPHKPLTYEE…DQPRRVKRFK (139 aa)). Intrachain disulfides connect C81–C92 and C103–C120. Residues 125–151 (EEEEQKQEEGNEEEKEVEKEEKEEDEK) show a composition bias toward acidic residues. Residues 125-154 (EEEEQKQEEGNEEEKEVEKEEKEEDEKDQP) are disordered.

The protein belongs to the cathelicidin family. As to expression, expressed by the venom gland.

It is found in the secreted. The protein resides in the target cell membrane. Potent antimicrobial peptide against Gram-negative (MIC=0.25 ug/ml against E.coli ATCC 25922, MIC=0.5 ug/ml against P.aeruginosa) and Gram-positive bacteria (MIC=64 ug/ml against E.faecalis, MIC=64 ug/ml against S.aureus). Adopts an amphipathic alpha helical conformation, that may allow to partition into the target membrane. Low hemolytic activities have been observed on mammalian cells. This is Cathelicidin-related peptide Oh-Cath from Ophiophagus hannah (King cobra).